Reading from the N-terminus, the 389-residue chain is 23S rRNA (uracil(747)-C(5))-methyltransferase RlmC (389 aa).

Positions 6, 14, 17, and 92 each coordinate [4Fe-4S] cluster. The S-adenosyl-L-methionine site is built by Gln-217, Phe-246, Glu-273, and Asn-319. Cys-346 acts as the Nucleophile in catalysis.

Belongs to the class I-like SAM-binding methyltransferase superfamily. RNA M5U methyltransferase family. RlmC subfamily.

It catalyses the reaction uridine(747) in 23S rRNA + S-adenosyl-L-methionine = 5-methyluridine(747) in 23S rRNA + S-adenosyl-L-homocysteine + H(+). In terms of biological role, catalyzes the formation of 5-methyl-uridine at position 747 (m5U747) in 23S rRNA. The sequence is that of 23S rRNA (uracil(747)-C(5))-methyltransferase RlmC from Glaesserella parasuis serovar 5 (strain SH0165) (Haemophilus parasuis).